Consider the following 269-residue polypeptide: Glutamate racemase (269 aa).

Substrate-binding positions include 7-8 (DS) and 39-40 (YG). Catalysis depends on cysteine 70, which acts as the Proton donor/acceptor. Residue 71–72 (NT) coordinates substrate. Residue cysteine 194 is the Proton donor/acceptor of the active site. Residue 195-196 (TH) participates in substrate binding.

It belongs to the aspartate/glutamate racemases family.

It catalyses the reaction L-glutamate = D-glutamate. Its pathway is cell wall biogenesis; peptidoglycan biosynthesis. Functionally, provides the (R)-glutamate required for cell wall biosynthesis. The polypeptide is Glutamate racemase (Ruegeria sp. (strain TM1040) (Silicibacter sp.)).